A 316-amino-acid polypeptide reads, in one-letter code: Biotin synthase (316 aa).

The Radical SAM core domain occupies 38 to 266; the sequence is YKGKKIELCA…DKDIRVCGGR (229 aa). 3 residues coordinate [4Fe-4S] cluster: cysteine 56, cysteine 60, and cysteine 63. [2Fe-2S] cluster contacts are provided by serine 100, cysteine 131, cysteine 191, and arginine 261.

Belongs to the radical SAM superfamily. Biotin synthase family. As to quaternary structure, homodimer. [4Fe-4S] cluster serves as cofactor. The cofactor is [2Fe-2S] cluster.

It catalyses the reaction (4R,5S)-dethiobiotin + (sulfur carrier)-SH + 2 reduced [2Fe-2S]-[ferredoxin] + 2 S-adenosyl-L-methionine = (sulfur carrier)-H + biotin + 2 5'-deoxyadenosine + 2 L-methionine + 2 oxidized [2Fe-2S]-[ferredoxin]. Its pathway is cofactor biosynthesis; biotin biosynthesis; biotin from 7,8-diaminononanoate: step 2/2. Functionally, catalyzes the conversion of dethiobiotin (DTB) to biotin by the insertion of a sulfur atom into dethiobiotin via a radical-based mechanism. The chain is Biotin synthase from Thermodesulfovibrio yellowstonii (strain ATCC 51303 / DSM 11347 / YP87).